The chain runs to 404 residues: Sorting nexin-5 (404 aa).

Ala2 is modified (N-acetylalanine). In terms of domain architecture, PX spans 25–172 (LNVDPSLQID…HVFLEYDQDL (148 aa)). Residues 40–46 (SERDKVK), 99–105 (FDGPREK), and 113–116 (EGSM) contribute to the a 1,2-diacyl-sn-glycero-3-phospho-(1D-myo-inositol-4,5-bisphosphate) site. The interval 169–261 (DQDLSVRRKN…HSLALEEPTV (93 aa)) is interaction with DOCK1. The tract at residues 183 to 200 (FGGFFKSVVKSADEVLFT) is membrane-binding amphipathic helix. Ser193 carries the post-translational modification Phosphoserine. Positions 202 to 404 (VKEVDDFFEQ…QSCIDLFKNN (203 aa)) constitute a BAR domain. Lys275 carries the N6-acetyllysine modification.

It belongs to the sorting nexin family. Forms heterodimers with BAR domain-containing sorting nexins SNX1 and SNX2; does not homodimerize. The heterodimers are proposed to self-assemble into helical arrays on the membrane to stabilize and expand local membrane curvature underlying endosomal tubule formation. Thought to be a component of the originally described retromer complex (also called SNX-BAR retromer) which is a pentamer containing the heterotrimeric retromer cargo-selective complex (CSC), also described as vacuolar protein sorting subcomplex (VPS), and a heterodimeric membrane-deforming subcomplex formed between SNX1 or SNX2 and SNX5 or SNX6 (also called SNX-BAR subcomplex); the respective CSC and SNX-BAR subcomplexes associate with low affinity. Interacts with SNX1, SNX2, VPS26A, VPS29, VPS35, DCTN1, DOCK1, MIB1, PIP5K1C isoform 3. Interacts with HGS; increased by PIP5K1C isoform 3 kinase activity and by PtdIns(3P) and/or PtdIns(3,4)P2. In terms of assembly, (Microbial infection) Interacts with human cytomegalovirus proteins UL35 and UL35A; these interactions inhibit the ability of USP7 to form nuclear bodies.

It localises to the endosome. The protein localises to the early endosome. The protein resides in the early endosome membrane. It is found in the cell membrane. Its subcellular location is the cytoplasmic vesicle membrane. It localises to the cytoplasm. The protein localises to the cell projection. The protein resides in the phagocytic cup. It is found in the ruffle. Involved in several stages of intracellular trafficking. Interacts with membranes containing phosphatidylinositol 3-phosphate (PtdIns(3P)) or phosphatidylinositol 3,4-bisphosphate (PtdIns(3,4)P2). Acts in part as component of the retromer membrane-deforming SNX-BAR subcomplex. The SNX-BAR retromer mediates retrograde transport of cargo proteins from endosomes to the trans-Golgi network (TGN) and is involved in endosome-to-plasma membrane transport for cargo protein recycling. The SNX-BAR subcomplex functions to deform the donor membrane into a tubular profile called endosome-to-TGN transport carrier (ETC). Does not have in vitro vesicle-to-membrane remodeling activity. Involved in retrograde transport of lysosomal enzyme receptor IGF2R. May function as link between endosomal transport vesicles and dynactin. Plays a role in the internalization of EGFR after EGF stimulation. Involved in EGFR endosomal sorting and degradation; the function involves PIP5K1C isoform 3 and is retromer-independent. Together with PIP5K1C isoform 3 facilitates HGS interaction with ubiquitinated EGFR, which initiates EGFR sorting to intraluminal vesicles (ILVs) of the multivesicular body for subsequent lysosomal degradation. Involved in E-cadherin sorting and degradation; inhibits PIP5K1C isoform 3-mediated E-cadherin degradation. Plays a role in macropinocytosis. In Homo sapiens (Human), this protein is Sorting nexin-5 (SNX5).